The primary structure comprises 177 residues: uncharacterized protein (177 aa).

This sequence to B.subtilis YutG.

This is an uncharacterized protein from Bacillus subtilis (strain 168).